A 314-amino-acid chain; its full sequence is Ribosomal RNA small subunit methyltransferase H (314 aa).

Residues 36–38, D56, F80, D102, and Q109 each bind S-adenosyl-L-methionine; that span reads GGH.

The protein belongs to the methyltransferase superfamily. RsmH family.

It localises to the cytoplasm. It carries out the reaction cytidine(1402) in 16S rRNA + S-adenosyl-L-methionine = N(4)-methylcytidine(1402) in 16S rRNA + S-adenosyl-L-homocysteine + H(+). Functionally, specifically methylates the N4 position of cytidine in position 1402 (C1402) of 16S rRNA. In Citrobacter koseri (strain ATCC BAA-895 / CDC 4225-83 / SGSC4696), this protein is Ribosomal RNA small subunit methyltransferase H.